The following is a 57-amino-acid chain: Bowman-Birk type proteinase inhibitor B4 (57 aa).

4 disulfides stabilise this stretch: Cys6/Cys55, Cys12/Cys17, Cys26/Cys33, and Cys30/Cys47.

Belongs to the Bowman-Birk serine protease inhibitor family. Expressed in bulb (at protein level).

In terms of biological role, serine protease inhibitor. Inhibits trypsin (Ki = 110 nM) and very weakly inhibits chymotrypsin (Ki =1200 nM). Does not inhibit bacterial subtilisin. This is Bowman-Birk type proteinase inhibitor B4 from Hyacinthus orientalis (Common hyacinth).